We begin with the raw amino-acid sequence, 317 residues long: Olfactory receptor 51Q1 (317 aa).

The Extracellular portion of the chain corresponds to 1–27 (MSQVTNTTQEGIYFILTDIPGFEASHI). N-linked (GlcNAc...) asparagine glycosylation is present at N6. The helical transmembrane segment at 28–48 (WISIPVCCLYTISIMGNTTIL) threads the bilayer. The Cytoplasmic portion of the chain corresponds to 49 to 56 (TVIRTEPS). The helical transmembrane segment at 57–77 (VHQRMYLFLSMLALTDLGLTL) threads the bilayer. The Extracellular portion of the chain corresponds to 78-101 (TTLPTVMQLLWFNVRRISSEACFA). Residues C99 and C191 are joined by a disulfide bond. The chain crosses the membrane as a helical span at residues 102–122 (QFFFLHGFSFMESSVLLAMSV). Residues 123-141 (DCYVAICCPLHYASILTNE) lie on the Cytoplasmic side of the membrane. Residues 142–162 (VIGRTGLAIICCCVLAVLPSL) form a helical membrane-spanning segment. The Extracellular segment spans residues 163-198 (FLLKRLPFCHSHLLSRSYCLHQDMIRLVCADIRLNS). A helical membrane pass occupies residues 199 to 219 (WYGFALALLIIIVDPLLIVIS). Residues 220–239 (YTLILKNILGTATWAERLRA) are Cytoplasmic-facing. A helical membrane pass occupies residues 240–260 (LNNCLSHILAVLVLYIPMVGV). The Extracellular segment spans residues 261–275 (SMTHRFAKHASPLVH). The helical transmembrane segment at 276-296 (VIMANIYLLAPPVMNPIIYSV) threads the bilayer. The Cytoplasmic segment spans residues 297 to 317 (KNKQIQWGMLNFLSLKNMHSR).

Belongs to the G-protein coupled receptor 1 family.

The protein localises to the cell membrane. Its function is as follows. Odorant receptor. This is Olfactory receptor 51Q1 (OR51Q1) from Homo sapiens (Human).